Reading from the N-terminus, the 234-residue chain is Sugar fermentation stimulation protein A (234 aa).

Residues 201 to 220 constitute a DNA-binding region (H-T-H motif); it reads LLSEAQQRGVEILAYKAELS.

It belongs to the SfsA family.

Functionally, binds to DNA non-specifically. Could be a regulatory factor involved in maltose metabolism. The protein is Sugar fermentation stimulation protein A of Escherichia coli O7:K1 (strain IAI39 / ExPEC).